Consider the following 307-residue polypeptide: uncharacterized protein (307 aa).

This is an uncharacterized protein from Acidianus hospitalis (AFV-1).